The primary structure comprises 486 residues: 2-succinylbenzoate--CoA ligase (486 aa).

Belongs to the ATP-dependent AMP-binding enzyme family. MenE subfamily.

It catalyses the reaction 2-succinylbenzoate + ATP + CoA = 2-succinylbenzoyl-CoA + AMP + diphosphate. It functions in the pathway quinol/quinone metabolism; 1,4-dihydroxy-2-naphthoate biosynthesis; 1,4-dihydroxy-2-naphthoate from chorismate: step 5/7. Its pathway is quinol/quinone metabolism; menaquinone biosynthesis. Functionally, converts 2-succinylbenzoate (OSB) to 2-succinylbenzoyl-CoA (OSB-CoA). The protein is 2-succinylbenzoate--CoA ligase of Bacillus subtilis (strain 168).